We begin with the raw amino-acid sequence, 206 residues long: uncharacterized protein (206 aa).

Disordered regions lie at residues 38–88 (RLQQ…NKNA) and 160–206 (HQNT…SVQE). The segment covering 40-73 (QQQQQQQQQQQQNRTASSLQQPQQQQPISPPLFL) has biased composition (low complexity). S68 is subject to Phosphoserine. Polar residues predominate over residues 78-88 (TSENSNLNKNA). Positions 165–186 (SSSNPGSMSSSPPNSASSIFNS) are enriched in low complexity. The span at 192-206 (PYTSQSFNPLESVQE) shows a compositional bias: polar residues.

It is found in the cytoplasm. This is an uncharacterized protein from Saccharomyces cerevisiae (strain ATCC 204508 / S288c) (Baker's yeast).